The sequence spans 246 residues: U2 small nuclear ribonucleoprotein A' (246 aa).

LRR repeat units follow at residues 19–40, 42–63, 64–85, and 88–109; these read RDRE…GVTR, QNDA…PLLQ, QLKT…IGHS, and ALHS…VHLS. Positions 122–160 constitute an LRRCT domain; the sequence is TPASREAQYREFVIWKLPQVRVLDYQRIKDKERARAKDL.

It belongs to the U2 small nuclear ribonucleoprotein A family. In terms of assembly, associated with the spliceosome.

Its subcellular location is the nucleus. Its function is as follows. Involved in pre-mRNA splicing. The chain is U2 small nuclear ribonucleoprotein A' (LEA1) from Mycosarcoma maydis (Corn smut fungus).